A 185-amino-acid polypeptide reads, in one-letter code: Protein GrpE (185 aa).

Positions 1–11 (MENTQENPTDQ) are enriched in polar residues. The interval 1–38 (MENTQENPTDQTTEETGREAQAAEPAAQAAENAAPAAE) is disordered. The segment covering 19-38 (EAQAAEPAAQAAENAAPAAE) has biased composition (low complexity).

It belongs to the GrpE family. Homodimer.

It localises to the cytoplasm. Functionally, participates actively in the response to hyperosmotic and heat shock by preventing the aggregation of stress-denatured proteins, in association with DnaK and GrpE. It is the nucleotide exchange factor for DnaK and may function as a thermosensor. Unfolded proteins bind initially to DnaJ; upon interaction with the DnaJ-bound protein, DnaK hydrolyzes its bound ATP, resulting in the formation of a stable complex. GrpE releases ADP from DnaK; ATP binding to DnaK triggers the release of the substrate protein, thus completing the reaction cycle. Several rounds of ATP-dependent interactions between DnaJ, DnaK and GrpE are required for fully efficient folding. The sequence is that of Protein GrpE from Burkholderia mallei (strain NCTC 10247).